We begin with the raw amino-acid sequence, 158 residues long: NAD(P)H-quinone oxidoreductase subunit N (158 aa).

Belongs to the complex I NdhN subunit family. As to quaternary structure, NDH-1 can be composed of about 15 different subunits; different subcomplexes with different compositions have been identified which probably have different functions.

It is found in the cellular thylakoid membrane. It carries out the reaction a plastoquinone + NADH + (n+1) H(+)(in) = a plastoquinol + NAD(+) + n H(+)(out). The catalysed reaction is a plastoquinone + NADPH + (n+1) H(+)(in) = a plastoquinol + NADP(+) + n H(+)(out). Functionally, NDH-1 shuttles electrons from an unknown electron donor, via FMN and iron-sulfur (Fe-S) centers, to quinones in the respiratory and/or the photosynthetic chain. The immediate electron acceptor for the enzyme in this species is believed to be plastoquinone. Couples the redox reaction to proton translocation, and thus conserves the redox energy in a proton gradient. Cyanobacterial NDH-1 also plays a role in inorganic carbon-concentration. The sequence is that of NAD(P)H-quinone oxidoreductase subunit N from Rippkaea orientalis (strain PCC 8801 / RF-1) (Cyanothece sp. (strain PCC 8801)).